Reading from the N-terminus, the 495-residue chain is Dipeptide and tripeptide permease B (495 aa).

Residues 1–16 (MDNKVSILNQPKPFKM) are Cytoplasmic-facing. A helical transmembrane segment spans residues 17-37 (IFFIELWERFGYYGLQGILAV). The Periplasmic segment spans residues 38–50 (YFVDKLGFSMQDS). A helical membrane pass occupies residues 51 to 71 (FVTFGAFAALVYGLVSVGGYV). Over 72-80 (GDYVLGTKR) the chain is Cytoplasmic. The helical transmembrane segment at 81 to 101 (TMVFGAVVLALGYFLMGFSIL) threads the bilayer. The Periplasmic segment spans residues 102–104 (NPN). A helical membrane pass occupies residues 105–125 (FIYVALGAIAVGNGLFKANPS). The Cytoplasmic segment spans residues 126–144 (SLLAKCYEKGDSRLDGAFT). Residues 145–165 (LYYMSINIGSLVSLSISPVIA) traverse the membrane as a helical segment. At 166–170 (NNYGY) the chain is on the periplasmic side. A helical transmembrane segment spans residues 171–191 (EYAFIICGLGLIASLFSYFSL). At 192-209 (RSTVQGIGSEPDALPLNK) the chain is on the cytoplasmic side. The chain crosses the membrane as a helical span at residues 210 to 230 (TKALIVLIGTIASTLVCAWLL). A topological domain (periplasmic) is located at residue Gln-231. Residues 232–252 (NIMMANLALGLIGVGVVGFFL) form a helical membrane-spanning segment. Residues 253-265 (KETFKEVGEQRNK) lie on the Cytoplasmic side of the membrane. Residues 266–286 (MIVAFILMLQAIIFYVLYAQM) form a helical membrane-spanning segment. Residues 287 to 309 (PTSLNFFAINNVHSELFGMDINP) are Periplasmic-facing. A helical transmembrane segment spans residues 310-330 (VSLQALNPFWVIFCSPILAYL). Topologically, residues 331-348 (YTYYGNQNKDLSMPGKFT) are cytoplasmic. A helical transmembrane segment spans residues 349–369 (VGMFMCAFGFLSVAAAGNWFA). The Periplasmic portion of the chain corresponds to 370 to 373 (DQAG). Residues 374 to 394 (MVSVWWMVLVYLFQSLGELMI) traverse the membrane as a helical segment. Residues 395 to 409 (SGLGLAMVASLVPQR) are Cytoplasmic-facing. The chain crosses the membrane as a helical span at residues 410-430 (LMGFTMGAWFLTQAASFIIGG). The Periplasmic segment spans residues 431–454 (YVATFSATPEHLTDPLDTLPVYTE). The helical transmembrane segment at 455 to 475 (LFQNIGFVTLAVAIVMAITAP) threads the bilayer. Topologically, residues 476–495 (KLNKMMTSSQPEDAELVEQP) are cytoplasmic.

The protein belongs to the major facilitator superfamily. Proton-dependent oligopeptide transporter (POT/PTR) (TC 2.A.17) family. DtpB subfamily.

It is found in the cell inner membrane. Proton-dependent permease that transports di- and tripeptides. This Aliivibrio fischeri (strain MJ11) (Vibrio fischeri) protein is Dipeptide and tripeptide permease B.